The primary structure comprises 105 residues: MKKIAAISLISIFIMSGCAVHNDETSIGKFGLAYKSNIQRKLDNQYYTEAEASLARGRISGAENIVKNDATHFCVTQGKKMQIVELKTEGVGLHGVARLTFKCGE.

This is an uncharacterized protein from Escherichia coli (strain K12).